The sequence spans 638 residues: Chaperone protein DnaK (638 aa).

Residue Thr-198 is modified to Phosphothreonine; by autocatalysis. Residues Lys-600–Lys-638 form a disordered region. Residues Ala-628 to Lys-638 show a composition bias toward acidic residues.

Belongs to the heat shock protein 70 family.

Its function is as follows. Acts as a chaperone. In Geobacter metallireducens (strain ATCC 53774 / DSM 7210 / GS-15), this protein is Chaperone protein DnaK.